The sequence spans 432 residues: Enolase (432 aa).

Residue glutamine 167 coordinates (2R)-2-phosphoglycerate. Catalysis depends on glutamate 209, which acts as the Proton donor. Residues aspartate 246, glutamate 290, and aspartate 317 each coordinate Mg(2+). Lysine 342, arginine 371, serine 372, and lysine 393 together coordinate (2R)-2-phosphoglycerate. The active-site Proton acceptor is the lysine 342.

Belongs to the enolase family. As to quaternary structure, component of the RNA degradosome, a multiprotein complex involved in RNA processing and mRNA degradation. Mg(2+) serves as cofactor.

Its subcellular location is the cytoplasm. It is found in the secreted. It localises to the cell surface. It catalyses the reaction (2R)-2-phosphoglycerate = phosphoenolpyruvate + H2O. Its pathway is carbohydrate degradation; glycolysis; pyruvate from D-glyceraldehyde 3-phosphate: step 4/5. Catalyzes the reversible conversion of 2-phosphoglycerate (2-PG) into phosphoenolpyruvate (PEP). It is essential for the degradation of carbohydrates via glycolysis. This is Enolase from Cronobacter sakazakii (strain ATCC BAA-894) (Enterobacter sakazakii).